A 284-amino-acid polypeptide reads, in one-letter code: Proteasome subunit beta 1 (284 aa).

Positions methionine 1 to glycine 54 are cleaved as a propeptide — removed in mature form; by autocatalysis. Threonine 55 functions as the Nucleophile in the catalytic mechanism. A compositionally biased stretch (basic and acidic residues) spans arginine 256–proline 277. Positions arginine 256 to methionine 284 are disordered.

The protein belongs to the peptidase T1B family. As to quaternary structure, the 20S proteasome core is composed of 14 alpha and 14 beta subunits that assemble into four stacked heptameric rings, resulting in a barrel-shaped structure. The two inner rings, each composed of seven catalytic beta subunits, are sandwiched by two outer rings, each composed of seven alpha subunits. The catalytic chamber with the active sites is on the inside of the barrel. Has a gated structure, the ends of the cylinder being occluded by the N-termini of the alpha-subunits. Is capped by the proteasome-associated ATPase, ARC.

The protein localises to the cytoplasm. The enzyme catalyses Cleavage of peptide bonds with very broad specificity.. It functions in the pathway protein degradation; proteasomal Pup-dependent pathway. Its activity is regulated as follows. The formation of the proteasomal ATPase ARC-20S proteasome complex, likely via the docking of the C-termini of ARC into the intersubunit pockets in the alpha-rings, may trigger opening of the gate for substrate entry. Interconversion between the open-gate and close-gate conformations leads to a dynamic regulation of the 20S proteasome proteolysis activity. Its function is as follows. Component of the proteasome core, a large protease complex with broad specificity involved in protein degradation. The sequence is that of Proteasome subunit beta 1 from Streptomyces avermitilis (strain ATCC 31267 / DSM 46492 / JCM 5070 / NBRC 14893 / NCIMB 12804 / NRRL 8165 / MA-4680).